Reading from the N-terminus, the 521-residue chain is Vang-like protein 2-A (521 aa).

The disordered stretch occupies residues Met-1–His-81. The Cytoplasmic segment spans residues Met-1 to Gly-108. The span at Gly-15–Lys-33 shows a compositional bias: basic residues. Residues Glu-57–Asn-67 are compositionally biased toward basic and acidic residues. Residues Gly-69 to His-81 show a composition bias toward low complexity. The helical transmembrane segment at Val-109 to Leu-129 threads the bilayer. At Pro-130–Gly-147 the chain is on the extracellular side. The helical transmembrane segment at Leu-148–Phe-168 threads the bilayer. Topologically, residues Arg-169–Val-178 are cytoplasmic. A helical membrane pass occupies residues Phe-179 to Phe-199. Residues Tyr-200–Tyr-218 are Extracellular-facing. A helical transmembrane segment spans residues Ala-219–Leu-239. The Cytoplasmic segment spans residues Arg-240–Val-521. Positions Glu-518–Val-521 match the PDZ-binding motif.

This sequence belongs to the Vang family. Interacts with dvl/dsh. Interacts with prickle3. As to expression, during gastrulation, broadly expressed throughout the marginal zone and animal cap region. From the neurula stages, expression becomes concentrated in neural tissues, in the neural plate and neural tube.

The protein resides in the cell membrane. Its function is as follows. Has a role in non-canonical Wnt/planar cell polarity (PCP) signaling; can recruit dvl/dsh and prickle from the cytoplasm to the plasma membrane. Acts in a PCP complex to regulate the polarized assembly of fibronectrin on the surface of the mesoderm during gastrulation. Regulates convergent extension cell movements in both dorsal mesoderm and neural tissue during gastrulation, without affecting cell fate. Regulates neural fold closure during neurulation. May be required for cell surface localization of fzd3 and fzd6 in the inner ear. This is Vang-like protein 2-A (vangl2-a) from Xenopus laevis (African clawed frog).